The following is a 99-amino-acid chain: Aspartyl/glutamyl-tRNA(Asn/Gln) amidotransferase subunit C (99 aa).

The protein belongs to the GatC family. Heterotrimer of A, B and C subunits.

It catalyses the reaction L-glutamyl-tRNA(Gln) + L-glutamine + ATP + H2O = L-glutaminyl-tRNA(Gln) + L-glutamate + ADP + phosphate + H(+). It carries out the reaction L-aspartyl-tRNA(Asn) + L-glutamine + ATP + H2O = L-asparaginyl-tRNA(Asn) + L-glutamate + ADP + phosphate + 2 H(+). Allows the formation of correctly charged Asn-tRNA(Asn) or Gln-tRNA(Gln) through the transamidation of misacylated Asp-tRNA(Asn) or Glu-tRNA(Gln) in organisms which lack either or both of asparaginyl-tRNA or glutaminyl-tRNA synthetases. The reaction takes place in the presence of glutamine and ATP through an activated phospho-Asp-tRNA(Asn) or phospho-Glu-tRNA(Gln). The polypeptide is Aspartyl/glutamyl-tRNA(Asn/Gln) amidotransferase subunit C (Macrococcus caseolyticus (strain JCSC5402) (Macrococcoides caseolyticum)).